The following is an 85-amino-acid chain: Small ribosomal subunit protein bS18 (85 aa).

The protein belongs to the bacterial ribosomal protein bS18 family. Part of the 30S ribosomal subunit. Forms a tight heterodimer with protein bS6.

Its function is as follows. Binds as a heterodimer with protein bS6 to the central domain of the 16S rRNA, where it helps stabilize the platform of the 30S subunit. The polypeptide is Small ribosomal subunit protein bS18 (Helicobacter pylori (strain Shi470)).